The primary structure comprises 116 residues: Iron-sulfur cluster insertion protein ErpA (116 aa).

Positions 44, 108, and 110 each coordinate iron-sulfur cluster.

The protein belongs to the HesB/IscA family. As to quaternary structure, homodimer. It depends on iron-sulfur cluster as a cofactor.

In terms of biological role, required for insertion of 4Fe-4S clusters for at least IspG. This chain is Iron-sulfur cluster insertion protein ErpA, found in Pseudomonas syringae pv. syringae (strain B728a).